The primary structure comprises 147 residues: Hemoglobin subunit beta (147 aa).

At valine 2 the chain carries N-acetylvaline. The Globin domain occupies 3–147; that stretch reads HLTGDEKAAV…VANALAHKYH (145 aa). At threonine 13 the chain carries Phosphothreonine. Serine 45 carries the post-translational modification Phosphoserine. N6-acetyllysine is present on lysine 60. Histidine 64 contributes to the heme b binding site. The residue at position 83 (lysine 83) is an N6-acetyllysine. Histidine 93 serves as a coordination point for heme b. At cysteine 94 the chain carries S-nitrosocysteine. An N6-acetyllysine modification is found at lysine 145.

It belongs to the globin family. As to quaternary structure, heterotetramer of two alpha chains and two beta chains. Red blood cells.

Involved in oxygen transport from the lung to the various peripheral tissues. The protein is Hemoglobin subunit beta (HBB) of Saimiri sciureus (Common squirrel monkey).